The sequence spans 345 residues: Gibberellin 2-beta-dioxygenase 2 (345 aa).

The 116-residue stretch at 170-285 (HSDSLLRINH…RMSMMYFAAP (116 aa)) folds into the Fe2OG dioxygenase domain. His-209, Asp-211, and His-266 together coordinate Fe cation. The active site involves Arg-276.

The protein belongs to the iron/ascorbate-dependent oxidoreductase family. GA2OX subfamily. Fe cation is required as a cofactor. In terms of tissue distribution, predominantly expressed in leaves.

It catalyses the reaction gibberellin A1 + 2-oxoglutarate + O2 = gibberellin A8 + succinate + CO2. Its pathway is plant hormone biosynthesis; gibberellin biosynthesis. Catalyzes the 2-beta-hydroxylation of several biologically active gibberellins, leading to the homeostatic regulation of their endogenous level. Catabolism of gibberellins (GAs) plays a central role in plant development. Converts GA9/GA20 to GA51/GA29 and GA4/GA1 to GA34/GA8. The polypeptide is Gibberellin 2-beta-dioxygenase 2 (GA2OX2) (Pisum sativum (Garden pea)).